Consider the following 341-residue polypeptide: UDP-3-O-acylglucosamine N-acyltransferase (341 aa).

His-242 functions as the Proton acceptor in the catalytic mechanism.

The protein belongs to the transferase hexapeptide repeat family. LpxD subfamily. Homotrimer.

The enzyme catalyses a UDP-3-O-[(3R)-3-hydroxyacyl]-alpha-D-glucosamine + a (3R)-hydroxyacyl-[ACP] = a UDP-2-N,3-O-bis[(3R)-3-hydroxyacyl]-alpha-D-glucosamine + holo-[ACP] + H(+). It participates in bacterial outer membrane biogenesis; LPS lipid A biosynthesis. In terms of biological role, catalyzes the N-acylation of UDP-3-O-acylglucosamine using 3-hydroxyacyl-ACP as the acyl donor. Is involved in the biosynthesis of lipid A, a phosphorylated glycolipid that anchors the lipopolysaccharide to the outer membrane of the cell. The chain is UDP-3-O-acylglucosamine N-acyltransferase from Haemophilus influenzae (strain ATCC 51907 / DSM 11121 / KW20 / Rd).